A 234-amino-acid polypeptide reads, in one-letter code: Orotidine 5'-phosphate decarboxylase (234 aa).

Residues Asp10, Lys31, 58 to 67 (DLKLHDIPNT), Thr121, Arg183, Gln192, Gly212, and Arg213 each bind substrate. The active-site Proton donor is the Lys60.

It belongs to the OMP decarboxylase family. Type 1 subfamily. As to quaternary structure, homodimer.

The catalysed reaction is orotidine 5'-phosphate + H(+) = UMP + CO2. Its pathway is pyrimidine metabolism; UMP biosynthesis via de novo pathway; UMP from orotate: step 2/2. Functionally, catalyzes the decarboxylation of orotidine 5'-monophosphate (OMP) to uridine 5'-monophosphate (UMP). This Halalkalibacterium halodurans (strain ATCC BAA-125 / DSM 18197 / FERM 7344 / JCM 9153 / C-125) (Bacillus halodurans) protein is Orotidine 5'-phosphate decarboxylase.